We begin with the raw amino-acid sequence, 276 residues long: NH(3)-dependent NAD(+) synthetase (276 aa).

43 to 50 (GISGGVDS) contributes to the ATP binding site. Mg(2+) is bound at residue Asp49. Arg146 is a deamido-NAD(+) binding site. Thr166 is a binding site for ATP. Glu171 contributes to the Mg(2+) binding site. Residues Lys179 and Asp186 each contribute to the deamido-NAD(+) site. Positions 195 and 217 each coordinate ATP. Deamido-NAD(+) is bound at residue 266 to 267 (HK).

The protein belongs to the NAD synthetase family. In terms of assembly, homodimer.

The catalysed reaction is deamido-NAD(+) + NH4(+) + ATP = AMP + diphosphate + NAD(+) + H(+). It participates in cofactor biosynthesis; NAD(+) biosynthesis; NAD(+) from deamido-NAD(+) (ammonia route): step 1/1. Functionally, catalyzes the ATP-dependent amidation of deamido-NAD to form NAD. Uses ammonia as a nitrogen source. This chain is NH(3)-dependent NAD(+) synthetase, found in Shewanella piezotolerans (strain WP3 / JCM 13877).